Reading from the N-terminus, the 225-residue chain is Nuclear protein UL4 homolog (225 aa).

Belongs to the alphaherpesvirinae HHV-1 UL4 family.

It localises to the host nucleus. This Equus caballus (Horse) protein is Nuclear protein UL4 homolog.